The following is a 60-amino-acid chain: Large ribosomal subunit protein bL32 (60 aa).

Residues 1–16 (MAVPKRKTTPSKRGMR) show a composition bias toward basic residues. The segment at 1-60 (MAVPKRKTTPSKRGMRRSADALKQPAYVENPDSGELHRPHHVDLKSGMYRGKQILKPKGE) is disordered. Over residues 34-44 (GELHRPHHVDL) the composition is skewed to basic and acidic residues.

Belongs to the bacterial ribosomal protein bL32 family.

The protein is Large ribosomal subunit protein bL32 of Parvibaculum lavamentivorans (strain DS-1 / DSM 13023 / NCIMB 13966).